The sequence spans 105 residues: Photosystem II 5 kDa protein, chloroplastic (105 aa).

The transit peptide at 1–77 (MASITMTTSF…ICSVAGVATA (77 aa)) directs the protein to the chloroplast.

Post-translationally, the maturation of the PSII-T precursor to its final form occurs through a two step process. First, a stromal intermediate is formed, which, upon translocation into the thylakoid membrane, is processed to the mature protein.

It is found in the plastid. Its subcellular location is the chloroplast thylakoid membrane. Functionally, may be a component of the oxygen-evolving complex. This is Photosystem II 5 kDa protein, chloroplastic (PSBT) from Gossypium hirsutum (Upland cotton).